The primary structure comprises 1104 residues: A disintegrin and metalloproteinase with thrombospondin motifs 10 (1104 aa).

An N-terminal signal peptide occupies residues 1 to 25 (MASACQILRWALALGLGLTFKVTHA). The propeptide occupies 26–233 (FRSQDELLSS…SERGQLGLKR (208 aa)). N-linked (GlcNAc...) asparagine glycans are attached at residues asparagine 90 and asparagine 222. The Peptidase M12B domain occupies 239–457 (RYVETLVVAD…GLGLCLNNRP (219 aa)). Cystine bridges form between cysteine 315–cysteine 376, cysteine 351–cysteine 358, cysteine 370–cysteine 452, cysteine 409–cysteine 436, cysteine 479–cysteine 501, cysteine 490–cysteine 508, cysteine 496–cysteine 531, cysteine 521–cysteine 536, cysteine 559–cysteine 596, cysteine 563–cysteine 601, and cysteine 574–cysteine 586. Histidine 392 is a binding site for Zn(2+). The active site involves glutamate 393. Zn(2+)-binding residues include histidine 396 and histidine 402. The region spanning 460–546 (QDFVYPTVAP…VPFGSRPEGV (87 aa)) is the Disintegrin domain. Residues 547 to 602 (DGAWGPWTPWGDCSRSCGGGVSSSSRHCDSPRPTIGGKYCLGERRRHRSCNTNDCP) enclose the TSP type-1 1 domain. A spacer region spans residues 706-818 (ETIEGVFSPA…PALHYRFNAP (113 aa)). 2 N-linked (GlcNAc...) asparagine glycosylation sites follow: asparagine 740 and asparagine 795. 4 TSP type-1 domains span residues 825–885 (PPYS…EPCP), 888–943 (WVVG…QGPM), 944–1003 (CPPE…RRCP), and 1004–1058 (PARW…AKCD). 3 cysteine pairs are disulfide-bonded: cysteine 837-cysteine 879, cysteine 841-cysteine 884, and cysteine 852-cysteine 866. Asparagine 892 carries an N-linked (GlcNAc...) asparagine glycan. The 39-residue stretch at 1066-1104 (GPEECKDVNKVAYCPLVLKFQFCSRAYFRQMCCKTCQGR) folds into the PLAC domain.

In terms of assembly, interacts with FBN1; this interaction promotes microfibrils assembly. The cofactor is Zn(2+). In terms of processing, glycosylated. Can be O-fucosylated by POFUT2 on a serine or a threonine residue found within the consensus sequence C1-X(2)-(S/T)-C2-G of the TSP type-1 repeat domains where C1 and C2 are the first and second cysteine residue of the repeat, respectively. Fucosylated repeats can then be further glycosylated by the addition of a beta-1,3-glucose residue by the glucosyltransferase, B3GALTL. Fucosylation mediates the efficient secretion of ADAMTS family members. Can also be C-glycosylated with one or two mannose molecules on tryptophan residues within the consensus sequence W-X-X-W of the TPRs, and N-glycosylated. These other glycosylations can also facilitate secretion. As to expression, widely expressed in adult tissues.

The protein localises to the secreted. It is found in the extracellular space. Its subcellular location is the extracellular matrix. Functionally, metalloprotease that participate in microfibrils assembly. Microfibrils are extracellular matrix components occurring independently or along with elastin in the formation of elastic tissues. This is A disintegrin and metalloproteinase with thrombospondin motifs 10 (Adamts10) from Mus musculus (Mouse).